We begin with the raw amino-acid sequence, 386 residues long: Queuine tRNA-ribosyltransferase (386 aa).

D99 functions as the Proton acceptor in the catalytic mechanism. Residues 99–103 (DSGGF), D153, Q198, and G225 contribute to the substrate site. Residues 256–262 (GVGKPED) are RNA binding. D275 (nucleophile) is an active-site residue. Residues 280–284 (TRNAR) are RNA binding; important for wobble base 34 recognition. 4 residues coordinate Zn(2+): C313, C315, C318, and H344.

It belongs to the queuine tRNA-ribosyltransferase family. As to quaternary structure, homodimer. Within each dimer, one monomer is responsible for RNA recognition and catalysis, while the other monomer binds to the replacement base PreQ1. It depends on Zn(2+) as a cofactor.

The catalysed reaction is 7-aminomethyl-7-carbaguanine + guanosine(34) in tRNA = 7-aminomethyl-7-carbaguanosine(34) in tRNA + guanine. It functions in the pathway tRNA modification; tRNA-queuosine biosynthesis. Its function is as follows. Catalyzes the base-exchange of a guanine (G) residue with the queuine precursor 7-aminomethyl-7-deazaguanine (PreQ1) at position 34 (anticodon wobble position) in tRNAs with GU(N) anticodons (tRNA-Asp, -Asn, -His and -Tyr). Catalysis occurs through a double-displacement mechanism. The nucleophile active site attacks the C1' of nucleotide 34 to detach the guanine base from the RNA, forming a covalent enzyme-RNA intermediate. The proton acceptor active site deprotonates the incoming PreQ1, allowing a nucleophilic attack on the C1' of the ribose to form the product. After dissociation, two additional enzymatic reactions on the tRNA convert PreQ1 to queuine (Q), resulting in the hypermodified nucleoside queuosine (7-(((4,5-cis-dihydroxy-2-cyclopenten-1-yl)amino)methyl)-7-deazaguanosine). In Acinetobacter baylyi (strain ATCC 33305 / BD413 / ADP1), this protein is Queuine tRNA-ribosyltransferase.